A 64-amino-acid chain; its full sequence is LKDGYIIDDLNCTFFCGRNAYCDDECKKKGGESGYCQWASPYGNACWCYKLPDRVSIKEKGRCN.

The region spanning 2 to 64 (KDGYIIDDLN…VSIKEKGRCN (63 aa)) is the LCN-type CS-alpha/beta domain. 4 disulfide bridges follow: Cys-12–Cys-63, Cys-16–Cys-36, Cys-22–Cys-46, and Cys-26–Cys-48. Asn-64 is modified (asparagine amide).

In terms of tissue distribution, expressed by the venom gland.

It is found in the secreted. Alpha toxins bind voltage-independently at site-3 of sodium channels (Nav) and inhibit the inactivation of the activated channels, thereby blocking neuronal transmission. The polypeptide is Alpha-toxin Amm5 (Androctonus mauritanicus mauritanicus (Scorpion)).